A 28-amino-acid polypeptide reads, in one-letter code: uncharacterized protein (28 aa).

This is an uncharacterized protein from Saccharomyces cerevisiae (strain ATCC 204508 / S288c) (Baker's yeast).